The following is a 342-amino-acid chain: Tetraacyldisaccharide 4'-kinase (342 aa).

68–75 (TVGGTGKT) serves as a coordination point for ATP.

It belongs to the LpxK family.

It catalyses the reaction a lipid A disaccharide + ATP = a lipid IVA + ADP + H(+). It functions in the pathway glycolipid biosynthesis; lipid IV(A) biosynthesis; lipid IV(A) from (3R)-3-hydroxytetradecanoyl-[acyl-carrier-protein] and UDP-N-acetyl-alpha-D-glucosamine: step 6/6. Functionally, transfers the gamma-phosphate of ATP to the 4'-position of a tetraacyldisaccharide 1-phosphate intermediate (termed DS-1-P) to form tetraacyldisaccharide 1,4'-bis-phosphate (lipid IVA). In Burkholderia lata (strain ATCC 17760 / DSM 23089 / LMG 22485 / NCIMB 9086 / R18194 / 383), this protein is Tetraacyldisaccharide 4'-kinase.